We begin with the raw amino-acid sequence, 590 residues long: Putative ferric-chelate reductase 1 (590 aa).

Residues Asn2–Tyr22 traverse the membrane as a helical segment. Positions Tyr12–Pro179 constitute a Reelin domain. A DOMON domain is found at Glu217–Gly330. Positions Asp334–His533 constitute a Cytochrome b561 domain. Residues Leu371–Ala391 traverse the membrane as a helical segment. Residues His372 and His413 each contribute to the heme b site. 2 helical membrane passes run Leu416–Gly436 and His445–Phe465. His445 contacts heme b. N-linked (GlcNAc...) asparagine glycosylation is present at Asn478. Heme b is bound at residue His481. Helical transmembrane passes span Trp482–Leu502, Ile517–Leu537, and Ile567–Ile587.

It belongs to the FRRS1 family. Heme b is required as a cofactor.

It localises to the membrane. Functionally, putative ferric-chelate reductases reduce Fe(3+) to Fe(2+) before its transport from the endosome to the cytoplasm. This is Putative ferric-chelate reductase 1 (frrs1) from Xenopus laevis (African clawed frog).